A 402-amino-acid chain; its full sequence is Oxysterol-binding protein 8 (402 aa).

A coiled-coil region spans residues D328–E361.

The protein belongs to the OSBP family.

The polypeptide is Oxysterol-binding protein 8 (osbH) (Dictyostelium discoideum (Social amoeba)).